The chain runs to 297 residues: MCAQHVADTSEVKWQKVLYERQPFPDNYVDQRFLEELRKNIYARKYQYWAVVFESSVVIQQLCSVCVFVVIWWYMDEGLLAPQWLFGTGLASSLVGYVLFDLIDGGDGRKKSGRTRWADLKSTLVFITFTYGFSPVLKTLTESVSTDTIYAMSVFMLLGHLIFFDYGANAAIVSSTLSLNMAIFASVCLASRLPRSLHAFIMVTFAIQIFALWPMLQKKLKAYTPRSYVGVTLLFAFSAFGGLLSISGVGAILFALLLFSISCLCPYYLIHLQLFKENIHGPWDEAEIKEDLSRFLS.

Transmembrane regions (helical) follow at residues 67 to 87, 88 to 108, 153 to 173, and 239 to 259; these read VFVV…WLFG, TGLA…GGDG, SVFM…AAIV, and AFGG…LLLF.

Belongs to the PIGC family. As to quaternary structure, component of the glycosylphosphatidylinositol-N-acetylglucosaminyltransferase (GPI-GnT) complex composed at least by PIGA, PIGC, PIGH, PIGP, PIGQ, PIGY and DPM2. Interacts with PIGQ. Interacts with the heterodimer PIGA:PIGH.

The protein localises to the endoplasmic reticulum membrane. It participates in glycolipid biosynthesis; glycosylphosphatidylinositol-anchor biosynthesis. Part of the glycosylphosphatidylinositol-N-acetylglucosaminyltransferase (GPI-GnT) complex that catalyzes the transfer of N-acetylglucosamine from UDP-N-acetylglucosamine to phosphatidylinositol and participates in the first step of GPI biosynthesis. The protein is Phosphatidylinositol N-acetylglucosaminyltransferase subunit C of Rattus norvegicus (Rat).